Here is a 150-residue protein sequence, read N- to C-terminus: Large ribosomal subunit protein bL9 (150 aa).

The protein belongs to the bacterial ribosomal protein bL9 family.

In terms of biological role, binds to the 23S rRNA. This is Large ribosomal subunit protein bL9 from Shewanella sediminis (strain HAW-EB3).